Consider the following 201-residue polypeptide: MKLIVGLGNPGMQYQFTPHNLGFLAVDRIAEKYGIRVANRNCKALTGRGVIEGVDVVLAKPETYMNLSGASVQELVSELEIDGTKDMIVIYDDLDLPYGSIRVRERGSAGGHNGVQSIIGALDTQEFLRIRIGIAPEFKLSDGASYVLSQLKKSQLPVVDQALDDAAEAVKVILREGPGPAMNRFNRKPEPPESGGEVAAK.

TRNA is bound at residue Tyr-14. His-19 (proton acceptor) is an active-site residue. Positions 64, 66, and 113 each coordinate tRNA. The interval 178-201 is disordered; it reads PGPAMNRFNRKPEPPESGGEVAAK.

Belongs to the PTH family. Monomer.

Its subcellular location is the cytoplasm. It catalyses the reaction an N-acyl-L-alpha-aminoacyl-tRNA + H2O = an N-acyl-L-amino acid + a tRNA + H(+). Functionally, hydrolyzes ribosome-free peptidyl-tRNAs (with 1 or more amino acids incorporated), which drop off the ribosome during protein synthesis, or as a result of ribosome stalling. Catalyzes the release of premature peptidyl moieties from peptidyl-tRNA molecules trapped in stalled 50S ribosomal subunits, and thus maintains levels of free tRNAs and 50S ribosomes. The sequence is that of Peptidyl-tRNA hydrolase from Koribacter versatilis (strain Ellin345).